Consider the following 235-residue polypeptide: MNRDSRTALVLFSGGQDSTTCLAWALTRFAHVETLAFDYGQRHRIELDCRLTVLAQLREQFPDWAERLGADHLLDLSLLAQISDTALTTEREIELQANGLPNTFVPGRNLLFLGMAATLAYRRSASVLVGGMCETDYSGYPDCRDNTLKALQVALSLGLAAPMTIETPLMFLTKAQTWTLAEDLGGAPLVELITEHTHTCYLGERGQRHAWGHGCGHCPACELRHAGHAAWLGGR.

12 to 22 (FSGGQDSTTCL) is a binding site for ATP. Zn(2+)-binding residues include Cys-200, Cys-215, Cys-218, and Cys-221.

Belongs to the QueC family. It depends on Zn(2+) as a cofactor.

The catalysed reaction is 7-carboxy-7-deazaguanine + NH4(+) + ATP = 7-cyano-7-deazaguanine + ADP + phosphate + H2O + H(+). It participates in purine metabolism; 7-cyano-7-deazaguanine biosynthesis. In terms of biological role, catalyzes the ATP-dependent conversion of 7-carboxy-7-deazaguanine (CDG) to 7-cyano-7-deazaguanine (preQ(0)). The chain is 7-cyano-7-deazaguanine synthase from Leptothrix cholodnii (strain ATCC 51168 / LMG 8142 / SP-6) (Leptothrix discophora (strain SP-6)).